The following is a 308-amino-acid chain: Serine/threonine-protein phosphatase PP1 (308 aa).

4 residues coordinate Mn(2+): aspartate 64, histidine 66, aspartate 92, and asparagine 124. Residue histidine 125 is the Proton donor of the active site. 2 residues coordinate Mn(2+): histidine 173 and histidine 248.

The protein belongs to the PPP phosphatase family. PP-1 subfamily. It depends on Mn(2+) as a cofactor.

It is found in the cytoplasm. The catalysed reaction is O-phospho-L-seryl-[protein] + H2O = L-seryl-[protein] + phosphate. It catalyses the reaction O-phospho-L-threonyl-[protein] + H2O = L-threonyl-[protein] + phosphate. This Neurospora crassa (strain ATCC 24698 / 74-OR23-1A / CBS 708.71 / DSM 1257 / FGSC 987) protein is Serine/threonine-protein phosphatase PP1 (pph-3).